The chain runs to 387 residues: 3-ketoacyl-CoA thiolase (387 aa).

Cysteine 91 serves as the catalytic Acyl-thioester intermediate. Residues histidine 343 and cysteine 373 each act as proton acceptor in the active site.

Belongs to the thiolase-like superfamily. Thiolase family. Heterotetramer of two alpha chains (FadB) and two beta chains (FadA).

It is found in the cytoplasm. It catalyses the reaction an acyl-CoA + acetyl-CoA = a 3-oxoacyl-CoA + CoA. It participates in lipid metabolism; fatty acid beta-oxidation. Its function is as follows. Catalyzes the final step of fatty acid oxidation in which acetyl-CoA is released and the CoA ester of a fatty acid two carbons shorter is formed. The chain is 3-ketoacyl-CoA thiolase from Vibrio cholerae serotype O1 (strain ATCC 39315 / El Tor Inaba N16961).